Reading from the N-terminus, the 128-residue chain is Fluoride-specific ion channel FluC (128 aa).

A run of 4 helical transmembrane segments spans residues 5-25, 35-55, 67-87, and 96-116; these read IVAI…LSIG, LGTL…VVAF, LFVI…SVEV, and FGWA…LTGL. Residues G75 and T78 each coordinate Na(+).

Belongs to the fluoride channel Fluc/FEX (TC 1.A.43) family.

It localises to the cell inner membrane. The catalysed reaction is fluoride(in) = fluoride(out). Na(+) is not transported, but it plays an essential structural role and its presence is essential for fluoride channel function. In terms of biological role, fluoride-specific ion channel. Important for reducing fluoride concentration in the cell, thus reducing its toxicity. The protein is Fluoride-specific ion channel FluC of Burkholderia pseudomallei (strain 1106a).